A 1203-amino-acid polypeptide reads, in one-letter code: ATP-dependent helicase/nuclease subunit A (1203 aa).

A UvrD-like helicase ATP-binding domain is found at 4-472 (VKLTPEQNEA…IRLKENFRSR (469 aa)). ATP is bound at residue 25 to 32 (ASAGSGKT). The 283-residue stretch at 503–785 (VQGNISDYPV…RVMTFHKSKG (283 aa)) folds into the UvrD-like helicase C-terminal domain.

Belongs to the helicase family. AddA subfamily. In terms of assembly, heterodimer of AddA and AddB/RexB. Mg(2+) serves as cofactor.

It catalyses the reaction Couples ATP hydrolysis with the unwinding of duplex DNA by translocating in the 3'-5' direction.. The enzyme catalyses ATP + H2O = ADP + phosphate + H(+). In terms of biological role, the heterodimer acts as both an ATP-dependent DNA helicase and an ATP-dependent, dual-direction single-stranded exonuclease. Recognizes the chi site generating a DNA molecule suitable for the initiation of homologous recombination. The AddA nuclease domain is required for chi fragment generation; this subunit has the helicase and 3' -&gt; 5' nuclease activities. The sequence is that of ATP-dependent helicase/nuclease subunit A from Lactococcus lactis subsp. cremoris (strain SK11).